Consider the following 314-residue polypeptide: Acetaldehyde dehydrogenase 1 (314 aa).

16–19 (SGNI) contributes to the NAD(+) binding site. Cys134 serves as the catalytic Acyl-thioester intermediate. Residues 165-173 (SAGPGTRAN) and Asn292 each bind NAD(+).

It belongs to the acetaldehyde dehydrogenase family.

It carries out the reaction acetaldehyde + NAD(+) + CoA = acetyl-CoA + NADH + H(+). The protein is Acetaldehyde dehydrogenase 1 (mhpF) of Cupriavidus necator (strain ATCC 17699 / DSM 428 / KCTC 22496 / NCIMB 10442 / H16 / Stanier 337) (Ralstonia eutropha).